Consider the following 428-residue polypeptide: Putative zinc metalloprotease SAS1196 (428 aa).

Residue histidine 21 participates in Zn(2+) binding. Glutamate 22 is an active-site residue. Histidine 25 is a Zn(2+) binding site. The next 4 membrane-spanning stretches (helical) occupy residues 172-194 (FLTL…IGLA), 309-331 (GSTL…GFSF), 352-374 (IISL…LIPI), and 401-420 (TTII…LVTW). Residues 186 to 269 (ALVLFIGLAY…TKSVELTPKK (84 aa)) form the PDZ domain.

The protein belongs to the peptidase M50B family. The cofactor is Zn(2+).

It is found in the cell membrane. The chain is Putative zinc metalloprotease SAS1196 from Staphylococcus aureus (strain MSSA476).